A 1337-amino-acid chain; its full sequence is Phosphoribosylformylglycinamidine synthase (1337 aa).

S215 carries the phosphoserine modification. ATP is bound by residues 322-333 and 402-404; these read GATTGTGGRIRD and AGF. 2 positions are modified to phosphothreonine: T619 and T622. A705 serves as a coordination point for ATP. 4 residues coordinate Mg(2+): D706, E745, N749, and D908. ATP is bound at residue S910. A Glutamine amidotransferase type-1 domain is found at 1063 to 1301; it reads RVAILREEGS…ALMPHPERAV (239 aa). C1157 (nucleophile) is an active-site residue. Residues H1296 and E1298 contribute to the active site.

In the N-terminal section; belongs to the FGAMS family.

Its subcellular location is the cytoplasm. The enzyme catalyses N(2)-formyl-N(1)-(5-phospho-beta-D-ribosyl)glycinamide + L-glutamine + ATP + H2O = 2-formamido-N(1)-(5-O-phospho-beta-D-ribosyl)acetamidine + L-glutamate + ADP + phosphate + H(+). It participates in purine metabolism; IMP biosynthesis via de novo pathway; 5-amino-1-(5-phospho-D-ribosyl)imidazole from N(2)-formyl-N(1)-(5-phospho-D-ribosyl)glycinamide: step 1/2. In terms of biological role, phosphoribosylformylglycinamidine synthase involved in the purines biosynthetic pathway. Catalyzes the ATP-dependent conversion of formylglycinamide ribonucleotide (FGAR) and glutamine to yield formylglycinamidine ribonucleotide (FGAM) and glutamate. The chain is Phosphoribosylformylglycinamidine synthase (Pfas) from Mus musculus (Mouse).